We begin with the raw amino-acid sequence, 53 residues long: UPF0391 membrane protein YPTS_0599 (53 aa).

A run of 2 helical transmembrane segments spans residues 4 to 24 (WGIIFLIIALIAAALGFGGLA) and 27 to 47 (AAWAAKVVFVVGIILFLISLF).

Belongs to the UPF0391 family.

The protein localises to the cell membrane. This chain is UPF0391 membrane protein YPTS_0599, found in Yersinia pseudotuberculosis serotype IB (strain PB1/+).